A 116-amino-acid chain; its full sequence is U16-barytoxin-Tl1b (116 aa).

A signal peptide spans 1–20 (MKTIIVFLSLLVLATKFGDA). The propeptide occupies 21–74 (KEGVNQKQKKEVTQNEFREEYLNEMAAMSLVQQLEAIERALFENEAGRNSRQKR). 3 cysteine pairs are disulfide-bonded: cysteine 75–cysteine 90, cysteine 82–cysteine 95, and cysteine 89–cysteine 110.

Belongs to the neurotoxin 14 (magi-1) family. 06 (ICK-Trit) subfamily. As to expression, expressed by the venom gland.

It is found in the secreted. Its function is as follows. Ion channel inhibitor. The polypeptide is U16-barytoxin-Tl1b (Trittame loki (Brush-footed trapdoor spider)).